A 331-amino-acid chain; its full sequence is F-box protein At2g26160 (331 aa).

Residues 4-52 (PEWSELPGDLINLTANRFSSISDVLRVRSICKPWRSAAATPKSFQCNLP) enclose the F-box domain.

This Arabidopsis thaliana (Mouse-ear cress) protein is F-box protein At2g26160.